A 130-amino-acid chain; its full sequence is Galectin-2 (130 aa).

The Galectin domain occupies 4–130 (KFEVKDLNMK…GLQISSFKLE (127 aa)). 65–71 (WGQEQRE) is an a beta-D-galactoside binding site.

In terms of assembly, homodimer.

Its function is as follows. This protein binds beta-galactoside. Its physiological function is not yet known. This Mus musculus (Mouse) protein is Galectin-2 (Lgals2).